A 374-amino-acid chain; its full sequence is Erythronate-4-phosphate dehydrogenase (374 aa).

Positions 53 and 75 each coordinate substrate. Residue Asp160 coordinates NAD(+). Arg222 is a catalytic residue. Residue Asp246 coordinates NAD(+). Residue Glu251 is part of the active site. His268 serves as the catalytic Proton donor. Gly271 contributes to the NAD(+) binding site. Substrate is bound at residue Tyr272.

The protein belongs to the D-isomer specific 2-hydroxyacid dehydrogenase family. PdxB subfamily. In terms of assembly, homodimer.

Its subcellular location is the cytoplasm. It carries out the reaction 4-phospho-D-erythronate + NAD(+) = (R)-3-hydroxy-2-oxo-4-phosphooxybutanoate + NADH + H(+). It participates in cofactor biosynthesis; pyridoxine 5'-phosphate biosynthesis; pyridoxine 5'-phosphate from D-erythrose 4-phosphate: step 2/5. Functionally, catalyzes the oxidation of erythronate-4-phosphate to 3-hydroxy-2-oxo-4-phosphonooxybutanoate. The sequence is that of Erythronate-4-phosphate dehydrogenase from Psychrobacter sp. (strain PRwf-1).